Consider the following 578-residue polypeptide: Lysine--tRNA ligase (578 aa).

Residues Glu414 and Glu421 each contribute to the Mg(2+) site.

It belongs to the class-II aminoacyl-tRNA synthetase family. In terms of assembly, homodimer. Mg(2+) serves as cofactor.

The protein resides in the cytoplasm. It catalyses the reaction tRNA(Lys) + L-lysine + ATP = L-lysyl-tRNA(Lys) + AMP + diphosphate. The protein is Lysine--tRNA ligase of Porphyromonas gingivalis (strain ATCC 33277 / DSM 20709 / CIP 103683 / JCM 12257 / NCTC 11834 / 2561).